The sequence spans 215 residues: Hibernation-associated plasma protein HP-27 (215 aa).

Residues Met-1 to Ser-30 form the signal peptide. The tract at residues Gly-34–Gly-79 is disordered. In terms of domain architecture, Collagen-like spans Gly-43–Thr-81. Residues Pro-44–Pro-63 show a composition bias toward pro residues. One can recognise a C1q domain in the interval His-85 to Asn-215. Residue Asn-155 is glycosylated (N-linked (GlcNAc...) asparagine).

As to expression, plasma; synthesized in the liver.

It is found in the secreted. Functionally, plasma proteins HP-20, HP-25, HP-27 and HP-55 form a 140 kDa complex via disulfide bonds in the plasma and are hibernation specific. The sequence is that of Hibernation-associated plasma protein HP-27 from Tamias sibiricus (Siberian chipmunk).